The chain runs to 258 residues: Spindlin-3 (258 aa).

The disordered stretch occupies residues 1–23 (MKTPFGKAAAGQRSRTGAGHGSV). Tudor-like domain stretches follow at residues 50 to 99 (VGCR…LELH), 129 to 178 (VGKA…YQLL), and 210 to 255 (VGKQ…YDLV). 2 histone H3K4me3 and H3R8me2a binding regions span residues E138 and 246–248 (DFH).

This sequence belongs to the SPIN/STSY family. As to quaternary structure, interacts with C11orf84/SPINDOC.

Functionally, exhibits H3K4me3-binding activity. This Pongo abelii (Sumatran orangutan) protein is Spindlin-3 (SPIN3).